The following is a 101-amino-acid chain: Signal recognition particle 19 kDa protein (101 aa).

The protein belongs to the SRP19 family. Part of the signal recognition particle protein translocation system, which is composed of SRP and FtsY. Archaeal SRP consists of a 7S RNA molecule of 300 nucleotides and two protein subunits: SRP54 and SRP19.

It is found in the cytoplasm. Functionally, involved in targeting and insertion of nascent membrane proteins into the cytoplasmic membrane. Binds directly to 7S RNA and mediates binding of the 54 kDa subunit of the SRP. The chain is Signal recognition particle 19 kDa protein from Methanosarcina mazei (strain ATCC BAA-159 / DSM 3647 / Goe1 / Go1 / JCM 11833 / OCM 88) (Methanosarcina frisia).